The chain runs to 610 residues: 1,8-cineol synthase, chloroplastic (610 aa).

Residues 1–51 (MNHHLIITPIFHLQIMLPVATLKRPPPPAATCSIYSFSRGTPSLVSKARLS) constitute a chloroplast transit peptide. (2E)-geranyl diphosphate-binding residues include Arg322, Asp359, Asp363, Arg500, and Asn503. Asp359 and Asp363 together coordinate Mg(2+). Residues 359–363 (DDVYD) carry the DDXXD motif motif. Mg(2+) is bound by residues Asn503, Thr507, and Glu511.

This sequence belongs to the terpene synthase family. Tpsb subfamily. In terms of assembly, monomer. The cofactor is Mg(2+). Requires Mn(2+) as cofactor. As to expression, confined to buds and flowers.

Its subcellular location is the plastid. The protein localises to the chloroplast. It catalyses the reaction (2E)-geranyl diphosphate + H2O = 1,8-cineole + diphosphate. The catalysed reaction is (2E)-geranyl diphosphate = limonene + diphosphate. The enzyme catalyses (2E)-geranyl diphosphate = sabinene + diphosphate. It carries out the reaction (2E)-geranyl diphosphate = (E)-beta-ocimene + diphosphate. It catalyses the reaction (2E)-geranyl diphosphate = beta-myrcene + diphosphate. The catalysed reaction is (2E)-geranyl diphosphate = alpha-pinene + diphosphate. The enzyme catalyses (2E)-geranyl diphosphate + H2O = (S)-alpha-terpineol + diphosphate. The protein operates within secondary metabolite biosynthesis; terpenoid biosynthesis. Functionally, monoterpene synthase involved in the biosynthesis of monoterpene natural products of the 'cineole cassette', volatile compounds present in floral scent. Catalyzes the conversion of (2E)-geranyl diphosphate (GPP) into 1,8-cineole and, as minor products, limonene, sabinene, (E)-beta-ocimene, beta-myrcene, alpha-pinene and alpha-terpineol. In Nicotiana suaveolens (Australian tobacco), this protein is 1,8-cineol synthase, chloroplastic.